Here is a 265-residue protein sequence, read N- to C-terminus: Ubiquinone biosynthesis protein COQ4 homolog, mitochondrial (265 aa).

The Zn(2+) site is built by histidine 162, aspartate 163, histidine 166, and glutamate 178.

Belongs to the COQ4 family. As to quaternary structure, component of a multi-subunit COQ enzyme complex. Requires Zn(2+) as cofactor.

The protein resides in the mitochondrion inner membrane. The catalysed reaction is a 4-hydroxy-3-methoxy-5-(all-trans-polyprenyl)benzoate + H(+) = a 2-methoxy-6-(all-trans-polyprenyl)phenol + CO2. The protein operates within cofactor biosynthesis; ubiquinone biosynthesis. Functionally, lyase that catalyzes the C1-decarboxylation of 4-hydroxy-3-methoxy-5-(all-trans-polyprenyl)benzoic acid into 2-methoxy-6-(all-trans-polyprenyl)phenol during ubiquinone biosynthesis. The polypeptide is Ubiquinone biosynthesis protein COQ4 homolog, mitochondrial (Drosophila willistoni (Fruit fly)).